A 130-amino-acid polypeptide reads, in one-letter code: Small ribosomal subunit protein uS8 (130 aa).

This sequence belongs to the universal ribosomal protein uS8 family. In terms of assembly, part of the 30S ribosomal subunit. Contacts proteins S5 and S12.

Functionally, one of the primary rRNA binding proteins, it binds directly to 16S rRNA central domain where it helps coordinate assembly of the platform of the 30S subunit. This is Small ribosomal subunit protein uS8 from Psychromonas ingrahamii (strain DSM 17664 / CCUG 51855 / 37).